The following is a 217-amino-acid chain: MKKPYRKISDYAIVGGLSALVMVSIVGCKSNADDKPKEQSSLSQSVQKGAFVILEEQKDKSYKVVEEYPSSRTHIVVRDLQGNERVLSNEEIQKLIKEEEAKIDNGTSKLIQPNNGGGGSNESSGFGLGSAILGSAAGAILGSYIGNKLFNNPNYQQNAQRTYKSPQAYQRSQNSFSKSAPSASSMGGASKGQSGFFGSSRPTSSPAVSSGTRGFNS.

A signal peptide spans 1–27; sequence MKKPYRKISDYAIVGGLSALVMVSIVG. Cys28 carries N-palmitoyl cysteine lipidation. Cys28 carries the S-diacylglycerol cysteine lipid modification. Residues 160–171 show a composition bias toward polar residues; it reads QRTYKSPQAYQR. Residues 160 to 217 are disordered; it reads QRTYKSPQAYQRSQNSFSKSAPSASSMGGASKGQSGFFGSSRPTSSPAVSSGTRGFNS. A compositionally biased stretch (low complexity) spans 172-210; the sequence is SQNSFSKSAPSASSMGGASKGQSGFFGSSRPTSSPAVSS.

The protein belongs to the UPF0323 family.

The protein localises to the cell membrane. In Helicobacter pylori (strain Shi470), this protein is UPF0323 lipoprotein HPSH_01205.